A 420-amino-acid chain; its full sequence is Serine hydroxymethyltransferase (420 aa).

(6S)-5,6,7,8-tetrahydrofolate contacts are provided by residues Leu121 and Gly125–Leu127. Lys229 is modified (N6-(pyridoxal phosphate)lysine).

Belongs to the SHMT family. Homodimer. Requires pyridoxal 5'-phosphate as cofactor.

It localises to the cytoplasm. It catalyses the reaction (6R)-5,10-methylene-5,6,7,8-tetrahydrofolate + glycine + H2O = (6S)-5,6,7,8-tetrahydrofolate + L-serine. Its pathway is one-carbon metabolism; tetrahydrofolate interconversion. It participates in amino-acid biosynthesis; glycine biosynthesis; glycine from L-serine: step 1/1. Catalyzes the reversible interconversion of serine and glycine with tetrahydrofolate (THF) serving as the one-carbon carrier. This reaction serves as the major source of one-carbon groups required for the biosynthesis of purines, thymidylate, methionine, and other important biomolecules. Also exhibits THF-independent aldolase activity toward beta-hydroxyamino acids, producing glycine and aldehydes, via a retro-aldol mechanism. This is Serine hydroxymethyltransferase from Glaesserella parasuis serovar 5 (strain SH0165) (Haemophilus parasuis).